The sequence spans 154 residues: Large ribosomal subunit protein uL13 (154 aa).

The tract at residues 132–154 (PHEAQQPETLDVGAMNRKNKRAA) is disordered.

This sequence belongs to the universal ribosomal protein uL13 family. As to quaternary structure, part of the 50S ribosomal subunit.

In terms of biological role, this protein is one of the early assembly proteins of the 50S ribosomal subunit, although it is not seen to bind rRNA by itself. It is important during the early stages of 50S assembly. In Rhodopseudomonas palustris (strain HaA2), this protein is Large ribosomal subunit protein uL13.